Here is a 323-residue protein sequence, read N- to C-terminus: DNA-directed RNA polymerase subunit alpha (323 aa).

Residues 1–225 are alpha N-terminal domain (alpha-NTD); the sequence is MLDIAMPKIE…QYSQTIADFN (225 aa). Residues 246–323 form an alpha C-terminal domain (alpha-CTD) region; the sequence is IYDTPIEELD…SHAARAEIEG (78 aa).

Belongs to the RNA polymerase alpha chain family. Homodimer. The RNAP catalytic core consists of 2 alpha, 1 beta, 1 beta' and 1 omega subunit. When a sigma factor is associated with the core the holoenzyme is formed, which can initiate transcription.

It carries out the reaction RNA(n) + a ribonucleoside 5'-triphosphate = RNA(n+1) + diphosphate. Functionally, DNA-dependent RNA polymerase catalyzes the transcription of DNA into RNA using the four ribonucleoside triphosphates as substrates. The sequence is that of DNA-directed RNA polymerase subunit alpha from Roseiflexus sp. (strain RS-1).